A 96-amino-acid polypeptide reads, in one-letter code: Large ribosomal subunit protein bL27 (96 aa).

Positions 1-9 (MLRLDLQFF) are excised as a propeptide. A disordered region spans residues 1-36 (MLRLDLQFFSTKKGQGSSKNGRDSESKRLGSKRADG). The segment covering 8–19 (FFSTKKGQGSSK) has biased composition (polar residues). Basic and acidic residues predominate over residues 20–35 (NGRDSESKRLGSKRAD).

It belongs to the bacterial ribosomal protein bL27 family. In terms of processing, the N-terminus is cleaved by ribosomal processing cysteine protease Prp.

In Oceanobacillus iheyensis (strain DSM 14371 / CIP 107618 / JCM 11309 / KCTC 3954 / HTE831), this protein is Large ribosomal subunit protein bL27.